The chain runs to 312 residues: Taste receptor type 2 member 62 (312 aa).

The Extracellular portion of the chain corresponds to M1 to L4. A helical transmembrane segment spans residues P5–L27. At V28 to R39 the chain is on the cytoplasmic side. Residues M40–A62 traverse the membrane as a helical segment. At M63–N81 the chain is on the extracellular side. The helical transmembrane segment at I82–V104 threads the bilayer. Topologically, residues K105–K127 are cytoplasmic. Residues L128–F150 traverse the membrane as a helical segment. Over G151 to G182 the chain is Extracellular. N162 is a glycosylation site (N-linked (GlcNAc...) asparagine). A helical membrane pass occupies residues F183–W205. Residues Q206–S231 are Cytoplasmic-facing. Residues L232–I254 form a helical membrane-spanning segment. Topologically, residues N255–N258 are extracellular. A helical membrane pass occupies residues H259–L281. Residues R282–P312 lie on the Cytoplasmic side of the membrane.

This sequence belongs to the G-protein coupled receptor T2R family.

It localises to the membrane. Receptor that may play a role in the perception of bitterness and is gustducin-linked. May play a role in sensing the chemical composition of the gastrointestinal content. The activity of this receptor may stimulate alpha gustducin, mediate PLC-beta-2 activation and lead to the gating of TRPM5. This chain is Taste receptor type 2 member 62 (TAS2R62), found in Pan paniscus (Pygmy chimpanzee).